Reading from the N-terminus, the 729-residue chain is MSLFGTSPDDPSMGDSVHQRSRSSLFADEPLPGGAGAGNSANLGSSSLFADDDGFQSSSPWNSNANKRAARHELVKTLLPDADVPESYIDAYDLVLNEGDRVGGVVGLTSVREILSSSGLSASDQAKIFNLVVSGDGDSANGLGRGQFNVLLALIGLAQEGEDLTFDAVDDRRKKLPLPKSSYLDRLRDRQQPSAPSHPEERPTTPPPPPAAINDPPSARSRQSRETLGGLDADPWGSPQLHRGHNHVQTEPEPPVLNGFGSVRSATNAWSSGAGEDETQHEVPSGLRANGRTDGAPSTSSGSGWGGSYRNTTAGDGFGGPIRAGLGNLGAPSSGQEEPNARRRLGIGISTSSQVEETVTVNLLPEKEGMFMFQHRNYEVKSSRRGSTVIRRYSDFVWLLDCLQKRYPFRQLPLLPPKRIAADSNSFLEKRRRGLVRFTNALVRHPVLSQEQLVVMFLTVPTELSVWRKQATISVQDEFTGRVLPPDLEDSLPANLTDIFETVRSGVKRSAEIYINLCTLLERLAKRNEGLAADHLRFSLALQSLTEVTKDTYAVDTNDVPILNEGIMATARHLSNSQSLLEDEARAWENGILEDLKFQRDCLVSVREMFDRRDRYARNNIPQLERRIESNERKLEELRTRPQGAVKPGEIEKVEESIFKDKESIVQQHARGVFIKECIRDELVHFQRSQYHISRLHQDWSQERVKYSELQADNWRSLSDQVEGMPLGE.

Disordered regions lie at residues 1–43 (MSLF…SANL) and 177–340 (PLPK…EEPN). Positions 356 to 464 (EETVTVNLLP…VMFLTVPTEL (109 aa)) constitute a PX domain. Arg392, Ser394, Lys418, and Arg431 together coordinate a 1,2-diacyl-sn-glycero-3-phospho-(1D-myo-inositol-3-phosphate).

It belongs to the sorting nexin family.

Its subcellular location is the cytoplasm. It localises to the membrane. Its function is as follows. Required for vacuolar protein sorting. The chain is Sorting nexin mvp1 (mvp1) from Aspergillus fumigatus (strain ATCC MYA-4609 / CBS 101355 / FGSC A1100 / Af293) (Neosartorya fumigata).